An 874-amino-acid chain; its full sequence is Bifunctional uridylyltransferase/uridylyl-removing enzyme (874 aa).

Residues 1–332 (MPLQSPLTFS…NGGATENAEI (332 aa)) are uridylyltransferase. The segment at 333-692 (LDADFQRRGS…ISKKATRGGT (360 aa)) is uridylyl-removing. Residues 451–573 (VDEHSIRLLK…VRDEESLEYL (123 aa)) form the HD domain. 2 consecutive ACT domains span residues 693–777 (EVFV…RTPN) and 800–874 (LMEF…AVTA).

It belongs to the GlnD family. The cofactor is Mg(2+).

It catalyses the reaction [protein-PII]-L-tyrosine + UTP = [protein-PII]-uridylyl-L-tyrosine + diphosphate. The enzyme catalyses [protein-PII]-uridylyl-L-tyrosine + H2O = [protein-PII]-L-tyrosine + UMP + H(+). With respect to regulation, uridylyltransferase (UTase) activity is inhibited by glutamine, while glutamine activates uridylyl-removing (UR) activity. Its function is as follows. Modifies, by uridylylation and deuridylylation, the PII regulatory proteins (GlnB and homologs), in response to the nitrogen status of the cell that GlnD senses through the glutamine level. Under low glutamine levels, catalyzes the conversion of the PII proteins and UTP to PII-UMP and PPi, while under higher glutamine levels, GlnD hydrolyzes PII-UMP to PII and UMP (deuridylylation). Thus, controls uridylylation state and activity of the PII proteins, and plays an important role in the regulation of nitrogen assimilation and metabolism. This chain is Bifunctional uridylyltransferase/uridylyl-removing enzyme, found in Vibrio parahaemolyticus serotype O3:K6 (strain RIMD 2210633).